The following is a 462-amino-acid chain: Iroquois-class homeodomain protein irx-1-B (462 aa).

The segment at residues 121 to 183 is a DNA-binding region (homeobox; TALE-type); it reads DPGRPKNATR…NARRRLKKEN (63 aa). 3 disordered regions span residues 191 to 302, 314 to 339, and 405 to 462; these read GKED…PHSK, SPDG…QHPA, and SLSS…LPSA. Acidic residues-rich tracts occupy residues 210–220 and 228–239; these read EDDEEIDLESI and NDGEQSNEEEDE. Basic and acidic residues predominate over residues 240–257; it reads KLDHFRHGEKVSLKKESE. The span at 410–426 shows a compositional bias: basic and acidic residues; that stretch reads RTPERTSPKHSDRENLP. Residues 446-455 are compositionally biased toward polar residues; the sequence is FSQQEGTSRI.

It belongs to the TALE/IRO homeobox family.

It localises to the nucleus. In terms of biological role, acts partially redundantly with other irx members in neural patterning. Required for formation of the posterior forebrain, midbrain, hindbrain, and to a lesser extent, spinal cord. Acts early in neural plate development to induce expression of some but not all proneural genes, and specify a neural precursor state. Also up-regulates repressors that prevent neuronal differentiation. Patterns the neuroectoderm in both the anterior/posterior and dorsal/ventral axes. Acts primarily as a transcriptional repressor during neural development, and binds to the bmp4 promoter to repress gene expression and thus mediate down-regulation of bmp4 by wnt signaling. Controls multiple processes through bmp4-repression including neural plate development, neural crest specification and Spemann organizer development. Involved in the specification of the preplacodal field at the anterior border of the neural plate. Regulates the genetic cascade of interactions that are necessary for positioning the isthmus organizer and the formation of the midbrain-hindbrain boundary. Required during at least two stages of pronephros kidney development; during neurula stages, maintains transcription of key renal genes to define the size and identity of the pronephric anlage, probably in part through regulation of bmp-signaling. Subsequently required for proper formation of the intermediate tubule segment of the pronephros. Acts principally as a transcriptional activator during pronephros development. The protein is Iroquois-class homeodomain protein irx-1-B (irx1-b) of Xenopus laevis (African clawed frog).